A 351-amino-acid chain; its full sequence is Glycerol-1-phosphate dehydrogenase [NAD(P)+] (351 aa).

NAD(+)-binding positions include 97 to 101 (GKVID) and 119 to 122 (TSPS). Asp124 is a binding site for substrate. Ser128 lines the NAD(+) pocket. Substrate is bound at residue Asp171. Positions 171 and 251 each coordinate Zn(2+). His255 is a binding site for substrate. Residue His267 participates in Zn(2+) binding.

It belongs to the glycerol-1-phosphate dehydrogenase family. In terms of assembly, homodimer. Zn(2+) serves as cofactor.

Its subcellular location is the cytoplasm. It carries out the reaction sn-glycerol 1-phosphate + NAD(+) = dihydroxyacetone phosphate + NADH + H(+). The catalysed reaction is sn-glycerol 1-phosphate + NADP(+) = dihydroxyacetone phosphate + NADPH + H(+). It participates in membrane lipid metabolism; glycerophospholipid metabolism. In terms of biological role, catalyzes the NAD(P)H-dependent reduction of dihydroxyacetonephosphate (DHAP or glycerone phosphate) to glycerol 1-phosphate (G1P). The G1P thus generated is used as the glycerophosphate backbone of phospholipids in the cellular membranes of Archaea. This chain is Glycerol-1-phosphate dehydrogenase [NAD(P)+], found in Saccharolobus solfataricus (strain ATCC 35092 / DSM 1617 / JCM 11322 / P2) (Sulfolobus solfataricus).